The sequence spans 239 residues: Small ribosomal subunit protein uS3 (239 aa).

Positions 39–107 (VRQVLRKKMS…PVHINVIEVR (69 aa)) constitute a KH type-2 domain. The segment at 214–239 (SQEKQDDGSRGDRNADRSSRRSREVR) is disordered. Residues 216 to 239 (EKQDDGSRGDRNADRSSRRSREVR) show a composition bias toward basic and acidic residues.

This sequence belongs to the universal ribosomal protein uS3 family. Part of the 30S ribosomal subunit. Forms a tight complex with proteins S10 and S14.

Binds the lower part of the 30S subunit head. Binds mRNA in the 70S ribosome, positioning it for translation. The protein is Small ribosomal subunit protein uS3 of Xylella fastidiosa (strain M23).